We begin with the raw amino-acid sequence, 553 residues long: Glucose-6-phosphate isomerase (553 aa).

D-glucose 6-phosphate is bound by residues 164–165 (GS), 215–220 (SKTFTT), glutamine 359, glutamate 363, histidine 394, and lysine 516. Glutamate 363 functions as the Proton donor in the catalytic mechanism. Residues histidine 394 and lysine 516 contribute to the active site.

It belongs to the GPI family. As to quaternary structure, homodimer.

It is found in the cytoplasm. The protein resides in the cytosol. The catalysed reaction is alpha-D-glucose 6-phosphate = beta-D-fructose 6-phosphate. Its pathway is carbohydrate degradation; glycolysis; D-glyceraldehyde 3-phosphate and glycerone phosphate from D-glucose: step 2/4. In the cytoplasm, catalyzes the conversion of glucose-6-phosphate to fructose-6-phosphate, the second step in glycolysis, and the reverse reaction during gluconeogenesis. This is Glucose-6-phosphate isomerase (pgiA) from Aspergillus oryzae (strain ATCC 42149 / RIB 40) (Yellow koji mold).